A 605-amino-acid chain; its full sequence is Meiosis-specific protein HOP1 (605 aa).

An HORMA domain is found at 20–250 (EQSQKLLQTM…TKHHKVALSV (231 aa)). Residues 348–364 (CKSCRKTLHGICYGNFL) fold into a zinc finger.

Its subcellular location is the nucleus. The protein resides in the chromosome. Its function is as follows. Probable constituent of the synaptonemal complex during meiosis. May interact with RED1. This is Meiosis-specific protein HOP1 (HOP1) from Saccharomyces cerevisiae (strain ATCC 204508 / S288c) (Baker's yeast).